The following is a 728-amino-acid chain: Protein Hook homolog 1 (728 aa).

N-acetylmethionine is present on methionine 1. The tract at residues 1–555 (MEDPQPLPQS…LKQKLEAHME (555 aa)) is sufficient for interaction with microtubules. Positions 12-128 (LPLCDSLIIW…RLLQLILGCA (117 aa)) constitute a Calponin-homology (CH) domain. Coiled-coil stretches lie at residues 168 to 443 (PASD…LNQA) and 477 to 658 (LRLQ…AKLR). Serine 235 carries the post-translational modification Phosphoserine. The interval 481 to 510 (QEGTENERIEQLQEQLEQKHRKMNELETEQ) is disordered. The sufficient for interaction with AKTIP and VPS18 stretch occupies residues 657–728 (LRDYEEKLIV…SVKVPAAASD (72 aa)). Residues serine 719 and serine 727 each carry the phosphoserine modification.

Belongs to the hook family. In terms of assembly, self-associates. Component of the FTS/Hook/FHIP complex (FHF complex), composed of AKTIP/FTS, FHIP1B, and one or more members of the Hook family of proteins HOOK1, HOOK2, and HOOK3. Interacts directly with AKTIP/FTS, HOOK2 and HOOK3. Associates with several subunits of the homotypic vesicular sorting complex (the HOPS complex) including VPS16, VPS18, VPS39 and VPS41; these interactions may be indirect. Interacts with CCDC181. Interacts (via coiled-coil region) with RIMBP3 (via C-terminus). Interacts with LRGUK (via guanylate kinase-like domain). Interacts with microtubules. May interacts with CLN3. Interacts with AP4M1; the interaction is direct, mediates the interaction between FTS-Hook-FHIP (FHF) complex and AP-4 and the perinuclear distribution of AP-4. As to expression, mainly expressed in testis.

It localises to the cytoplasm. It is found in the cytoskeleton. Component of the FTS/Hook/FHIP complex (FHF complex). The FHF complex may function to promote vesicle trafficking and/or fusion via the homotypic vesicular protein sorting complex (the HOPS complex). FHF complex promotes the distribution of AP-4 complex to the perinuclear area of the cell. Required for spermatid differentiation. Probably involved in the positioning of the microtubules of the manchette and the flagellum in relation to the membrane skeleton. The sequence is that of Protein Hook homolog 1 (Hook1) from Mus musculus (Mouse).